The following is a 427-amino-acid chain: UPF0229 protein YeaH (427 aa).

The interval 87–110 is disordered; the sequence is RIERSQGGGGGSGSGQGQASQDGE. The segment covering 92–102 has biased composition (gly residues); sequence QGGGGGSGSGQ.

Belongs to the UPF0229 family.

The protein is UPF0229 protein YeaH of Escherichia coli O6:K15:H31 (strain 536 / UPEC).